The chain runs to 447 residues: Alliin lyase (447 aa).

Residues 1-2 (QA) constitute a propeptide that is removed on maturation. The EGF-like; atypical domain occupies 15–61 (EAVANINCSGHGRAFLDGILSDGSPKCECNTCYTGADCSQKITGCSA). A glycan (N-linked (GlcNAc...) asparagine) is linked at Asn21. 3 disulfides stabilise this stretch: Cys22-Cys41, Cys43-Cys52, and Cys46-Cys59. 94–102 (YFFNPVSNF) is a chloride binding site. N-linked (GlcNAc...) asparagine glycans are attached at residues Asn148 and Asn193. An N6-(pyridoxal phosphate)lysine modification is found at Lys253. A glycan (N-linked (GlcNAc...) asparagine) is linked at Asn330. Cys370 and Cys378 are disulfide-bonded.

This sequence belongs to the alliinase family. Homodimer. It depends on pyridoxal 5'-phosphate as a cofactor.

It is found in the vacuole. The enzyme catalyses an S-alkyl-L-cysteine S-oxide = an S-alkyl sulfenate + 2-aminoprop-2-enoate. This chain is Alliin lyase, found in Allium cepa var. aggregatum (Shallot).